A 284-amino-acid chain; its full sequence is RCS-specific HTH-type transcriptional activator RclR (284 aa).

The cysteines at positions 21 and 89 are disulfide-linked. In terms of domain architecture, HTH araC/xylS-type spans 177–278 (PRLGAVIQQM…GCTPGEYRER (102 aa)). 2 DNA-binding regions (H-T-H motif) span residues 197–218 (ESLA…RDVS) and 245–268 (VVVI…VREF).

With respect to regulation, oxydation of Cys-21 leads to partial activation of RclR, followed by the formation of an intramolecular disulfide bond between Cys-21 and Cys-89, which stabilizes the active form of RclR. Its function is as follows. Involved in reactive chlorine species (RCS) stress resistance. Up-regulates, in response to hypochlorous acid (HOCl), the expression of three genes essential for survival of RCS stress (rclA, rclB and rclC) and its own expression. In Escherichia coli (strain K12), this protein is RCS-specific HTH-type transcriptional activator RclR (rclR).